A 341-amino-acid chain; its full sequence is MSSELEALRQETEQLKNQIREARKAAADTTLNQAAVNVEQVGRIQMRTRRTLRGHLAKIYAMHWASDSRNLVSASQDGKLIVWDGYTTNKVHAIPLRSSWVMTCAYAPSGSYVACGGLDNICSIYSLKTREGNVRVSRELPGHTGYLSCCRFLDDNQIVTSSGDMSCALWDIETGQQTTAFTGHTGDVMSLSLSPDMRTFVSGACDASAKLWDIRDGMCKQTFSGHESDINAITYFPNGYAFATGSDDATCRLFDIRADQEIGMYSHDNIICGITSVAFSKSGRLLLGGYDDFNCNVWDVLRQERAGVLAGHDNRVSCLGVTEDGMAVATGSWDSFLRIWN.

WD repeat units lie at residues 54–93 (GHLAKIYAMHWASDSRNLVSASQDGKLIVWDGYTTNKVHA), 96–135 (LRSSWVMTCAYAPSGSYVACGGLDNICSIYSLKTREGNVR), 142–180 (GHTGYLSCCRFLDDNQIVTSSGDMSCALWDIETGQQTTA), 183–222 (GHTGDVMSLSLSPDMRTFVSGACDASAKLWDIRDGMCKQT), 225–264 (GHESDINAITYFPNGYAFATGSDDATCRLFDIRADQEIGM), 269–308 (NIICGITSVAFSKSGRLLLGGYDDFNCNVWDVLRQERAGV), and 311–341 (GHDNRVSCLGVTEDGMAVATGSWDSFLRIWN).

This sequence belongs to the WD repeat G protein beta family. G proteins are composed of 3 units, alpha, beta and gamma. The G protein beta1-gamma2 dimer interacts with calmodulin. As to expression, abundantly expressed in gills, gonad and mantle and at lower levels in digestion gland. Not detected in muscle.

Its subcellular location is the cytoplasm. Its function is as follows. Guanine nucleotide-binding proteins (G proteins) are involved as a modulator or transducer in various transmembrane signaling systems. The beta and gamma chains are required for the GTPase activity, for replacement of GDP by GTP, and for G protein-effector interaction. This chain is Guanine nucleotide-binding protein subunit beta, found in Pinctada fucata (Akoya pearl oyster).